We begin with the raw amino-acid sequence, 246 residues long: Small ribosomal subunit protein uS2 (246 aa).

This sequence belongs to the universal ribosomal protein uS2 family.

This Stutzerimonas stutzeri (strain A1501) (Pseudomonas stutzeri) protein is Small ribosomal subunit protein uS2.